Here is a 624-residue protein sequence, read N- to C-terminus: LRR receptor kinase BAK1 (624 aa).

The N-terminal stretch at 1-25 (MAAHRWAVWAVLLLRLLVPAARVLA) is a signal peptide. The Extracellular segment spans residues 26–237 (NMEGDALHSL…QSPGSSSSTG (212 aa)). LRR repeat units follow at residues 91–115 (LKNLQYLELYSNNISGTIPSELGNL), 117–139 (NLVSLDLYLNNFTGPIPDSLGNL), 140–163 (LKLRFLRLNNNSLSGSIPKSLTAI), and 164–188 (TALQVLDLSNNNLSGEVPSTGSFSL). Residues Asn-103, Asn-114, Asn-127, Asn-149, and Asn-175 are each glycosylated (N-linked (GlcNAc...) asparagine). The disordered stretch occupies residues 205–236 (TTKPCPGAPPFSPPPPYNPPTPVQSPGSSSST). A compositionally biased stretch (pro residues) spans 210-227 (PGAPPFSPPPPYNPPTPV). The helical transmembrane segment at 238–258 (AIAGGVAAGAALLFAIPAIGF) threads the bilayer. Residues 259–624 (AWYRRRKPQE…LHAVELSGPR (366 aa)) are Cytoplasmic-facing. The Protein kinase domain maps to 301 to 588 (FSNKNILGRG…GLAERWEEWQ (288 aa)). ATP is bound by residues 307-315 (LGRGGFGKV) and Lys-329. The active-site Proton acceptor is the Asp-428.

It belongs to the protein kinase superfamily. Ser/Thr protein kinase family. Forms homodimers. Interacts with BRI1. Interacts with REM4.1. Expressed in developing lateral roots, shoot apex, leaf blades, lamina joints and flowers. Expressed at low levels in leaf sheaths and panicles.

The protein localises to the cell membrane. It carries out the reaction L-seryl-[protein] + ATP = O-phospho-L-seryl-[protein] + ADP + H(+). The enzyme catalyses L-threonyl-[protein] + ATP = O-phospho-L-threonyl-[protein] + ADP + H(+). Functionally, LRR receptor kinase involved in defense response. Does not seem to be required specifically for XA21-mediated immunity or basal resistance to Xanthomonas oryzae pv. oryzae (Xoo), or immunity to Magnaporthe oryzae. Involved in brassinosteroid (BR) signaling pathway. Acts as a coreceptor of BRI1. Forms at the plasma membrane a receptor complex with BRI1 which is activated in response to brassinolide. Phosphorylates BRI1. Required for normal plant growth and leaf development. Possesses kinase activity in vitro. In Oryza sativa subsp. japonica (Rice), this protein is LRR receptor kinase BAK1.